A 40-amino-acid polypeptide reads, in one-letter code: MITDVQLAIFSNVLGVFLFLLVVAYHYINANTGKPIPKAK.

The Lumenal portion of the chain corresponds to 1–4 (MITD). The chain crosses the membrane as a helical span at residues 5–25 (VQLAIFSNVLGVFLFLLVVAY). Residues 26 to 40 (HYINANTGKPIPKAK) are Cytoplasmic-facing.

The protein belongs to the OST4 family. Component of the oligosaccharyltransferase (OST) complex.

Its subcellular location is the endoplasmic reticulum membrane. Its function is as follows. Subunit of the oligosaccharyl transferase (OST) complex that catalyzes the initial transfer of a defined glycan (Glc(3)Man(9)GlcNAc(2) in eukaryotes) from the lipid carrier dolichol-pyrophosphate to an asparagine residue within an Asn-X-Ser/Thr consensus motif in nascent polypeptide chains, the first step in protein N-glycosylation. N-glycosylation occurs cotranslationally and the complex associates with the Sec61 complex at the channel-forming translocon complex that mediates protein translocation across the endoplasmic reticulum (ER). All subunits are required for a maximal enzyme activity. The protein is Dolichyl-diphosphooligosaccharide--protein glycosyltransferase subunit 4 of Drosophila ananassae (Fruit fly).